The chain runs to 614 residues: UvrABC system protein C (614 aa).

The GIY-YIG domain occupies 19-97 (SLPGCYLWKN…IKKYNPKFNV (79 aa)). The region spanning 208–243 (ERLVADLKKAMMDASSKMEYERAGFLKQRIEKINQL) is the UVR domain.

It belongs to the UvrC family. In terms of assembly, interacts with UvrB in an incision complex.

It localises to the cytoplasm. Its function is as follows. The UvrABC repair system catalyzes the recognition and processing of DNA lesions. UvrC both incises the 5' and 3' sides of the lesion. The N-terminal half is responsible for the 3' incision and the C-terminal half is responsible for the 5' incision. The chain is UvrABC system protein C from Leptospira biflexa serovar Patoc (strain Patoc 1 / Ames).